Consider the following 663-residue polypeptide: Putative ankyrin repeat protein R219 (663 aa).

ANK repeat units lie at residues 91 to 118, 119 to 148, 200 to 229, 258 to 288, and 322 to 351; these read FRIK…GYKV, DFDS…KLSS, ANQQ…KDGT, DWHV…KINP, and YFSH…GITV.

This chain is Putative ankyrin repeat protein R219, found in Acanthamoeba polyphaga mimivirus (APMV).